The following is a 444-amino-acid chain: N-succinylarginine dihydrolase (444 aa).

Substrate-binding positions include 19 to 28, Asn110, and 137 to 138; these read AGLSFGNVAS and HR. Glu174 is an active-site residue. Arg214 serves as a coordination point for substrate. Residue His250 is part of the active site. Substrate-binding residues include Asp252 and Asn362. Cys368 (nucleophile) is an active-site residue.

Belongs to the succinylarginine dihydrolase family. In terms of assembly, homodimer.

The enzyme catalyses N(2)-succinyl-L-arginine + 2 H2O + 2 H(+) = N(2)-succinyl-L-ornithine + 2 NH4(+) + CO2. Its pathway is amino-acid degradation; L-arginine degradation via AST pathway; L-glutamate and succinate from L-arginine: step 2/5. Functionally, catalyzes the hydrolysis of N(2)-succinylarginine into N(2)-succinylornithine, ammonia and CO(2). This chain is N-succinylarginine dihydrolase, found in Shewanella baltica (strain OS223).